Here is a 435-residue protein sequence, read N- to C-terminus: Xylose isomerase (435 aa).

Active-site residues include histidine 100 and aspartate 103. Glutamate 231, glutamate 267, histidine 270, aspartate 295, aspartate 306, aspartate 308, and aspartate 338 together coordinate Mg(2+).

Belongs to the xylose isomerase family. In terms of assembly, homotetramer. It depends on Mg(2+) as a cofactor.

It localises to the cytoplasm. The enzyme catalyses alpha-D-xylose = alpha-D-xylulofuranose. The sequence is that of Xylose isomerase from Brucella canis (strain ATCC 23365 / NCTC 10854 / RM-666).